A 147-amino-acid chain; its full sequence is MRSLLILVLCFLPLAAPGKVYGRCELAAAMKRMGLDNYRGYSLGNWVCAAKFESNFNTGATNRNTDGSTDYGILQINSRWWCNDGRTPGSKNLCHIPCSALLSSDITASVNCAKKIVSDGNGMNAWVAWRKHCKGTDVNVWIRGCRL.

Positions 1-17 are cleaved as a signal peptide; that stretch reads MRSLLILVLCFLPLAAP. The C-type lysozyme domain occupies 19–147; it reads KVYGRCELAA…VNVWIRGCRL (129 aa). 4 disulfide bridges follow: Cys24-Cys145, Cys48-Cys133, Cys82-Cys98, and Cys94-Cys112. Active-site residues include Glu53 and Asp70.

Belongs to the glycosyl hydrolase 22 family. As to quaternary structure, monomer. In terms of processing, by an evolutionary shift in the site of proteolytic cleavage of prelysozyme, Gly-18 became the N-terminal residue of the mature protein instead of being the C-terminal residue of the signal sequence as in other birds.

It localises to the secreted. The enzyme catalyses Hydrolysis of (1-&gt;4)-beta-linkages between N-acetylmuramic acid and N-acetyl-D-glucosamine residues in a peptidoglycan and between N-acetyl-D-glucosamine residues in chitodextrins.. In terms of biological role, lysozymes have primarily a bacteriolytic function; those in tissues and body fluids are associated with the monocyte-macrophage system and enhance the activity of immunoagents. The chain is Lysozyme C (LYZ) from Phasianus colchicus colchicus (Black-necked pheasant).